A 236-amino-acid polypeptide reads, in one-letter code: 1-(5-phosphoribosyl)-5-[(5-phosphoribosylamino)methylideneamino] imidazole-4-carboxamide isomerase (236 aa).

Residue Asp-8 is the Proton acceptor of the active site. Asp-129 (proton donor) is an active-site residue.

It belongs to the HisA/HisF family.

The protein localises to the cytoplasm. It catalyses the reaction 1-(5-phospho-beta-D-ribosyl)-5-[(5-phospho-beta-D-ribosylamino)methylideneamino]imidazole-4-carboxamide = 5-[(5-phospho-1-deoxy-D-ribulos-1-ylimino)methylamino]-1-(5-phospho-beta-D-ribosyl)imidazole-4-carboxamide. Its pathway is amino-acid biosynthesis; L-histidine biosynthesis; L-histidine from 5-phospho-alpha-D-ribose 1-diphosphate: step 4/9. The chain is 1-(5-phosphoribosyl)-5-[(5-phosphoribosylamino)methylideneamino] imidazole-4-carboxamide isomerase from Methanosphaerula palustris (strain ATCC BAA-1556 / DSM 19958 / E1-9c).